The following is a 394-amino-acid chain: Argininosuccinate synthase (394 aa).

ATP-binding positions include 7 to 15 (AYSGGLDTS) and alanine 35. Position 85 (tyrosine 85) interacts with L-citrulline. Glycine 115 is a binding site for ATP. The L-aspartate site is built by threonine 117, asparagine 121, and aspartate 122. Position 121 (asparagine 121) interacts with L-citrulline. The L-citrulline site is built by arginine 125, serine 174, serine 183, glutamate 258, and tyrosine 270.

It belongs to the argininosuccinate synthase family. Type 1 subfamily. Homotetramer.

The protein localises to the cytoplasm. The catalysed reaction is L-citrulline + L-aspartate + ATP = 2-(N(omega)-L-arginino)succinate + AMP + diphosphate + H(+). The protein operates within amino-acid biosynthesis; L-arginine biosynthesis; L-arginine from L-ornithine and carbamoyl phosphate: step 2/3. The sequence is that of Argininosuccinate synthase from Methanopyrus kandleri (strain AV19 / DSM 6324 / JCM 9639 / NBRC 100938).